A 183-amino-acid polypeptide reads, in one-letter code: Large ribosomal subunit protein uL5 (183 aa).

This sequence belongs to the universal ribosomal protein uL5 family. In terms of assembly, part of the 50S ribosomal subunit; part of the 5S rRNA/L5/L18/L25 subcomplex. Contacts the 5S rRNA and the P site tRNA. Forms a bridge to the 30S subunit in the 70S ribosome.

In terms of biological role, this is one of the proteins that bind and probably mediate the attachment of the 5S RNA into the large ribosomal subunit, where it forms part of the central protuberance. In the 70S ribosome it contacts protein S13 of the 30S subunit (bridge B1b), connecting the 2 subunits; this bridge is implicated in subunit movement. Contacts the P site tRNA; the 5S rRNA and some of its associated proteins might help stabilize positioning of ribosome-bound tRNAs. In Fusobacterium nucleatum subsp. nucleatum (strain ATCC 25586 / DSM 15643 / BCRC 10681 / CIP 101130 / JCM 8532 / KCTC 2640 / LMG 13131 / VPI 4355), this protein is Large ribosomal subunit protein uL5.